We begin with the raw amino-acid sequence, 202 residues long: Imidazoleglycerol-phosphate dehydratase (202 aa).

Belongs to the imidazoleglycerol-phosphate dehydratase family.

Its subcellular location is the cytoplasm. The enzyme catalyses D-erythro-1-(imidazol-4-yl)glycerol 3-phosphate = 3-(imidazol-4-yl)-2-oxopropyl phosphate + H2O. The protein operates within amino-acid biosynthesis; L-histidine biosynthesis; L-histidine from 5-phospho-alpha-D-ribose 1-diphosphate: step 6/9. The sequence is that of Imidazoleglycerol-phosphate dehydratase from Brucella anthropi (strain ATCC 49188 / DSM 6882 / CCUG 24695 / JCM 21032 / LMG 3331 / NBRC 15819 / NCTC 12168 / Alc 37) (Ochrobactrum anthropi).